The primary structure comprises 146 residues: Leghemoglobin (146 aa).

A Globin domain is found at 3-146 (AFTEKQEALV…FAAGIKKAYA (144 aa)). 2 positions are modified to nitrated tyrosine: Tyr-26 and Tyr-31. Ser-46 is a heme b binding site. Residue Ser-46 is modified to Phosphoserine. His-62 serves as a coordination point for O2. The heme b site is built by His-93 and Lys-96. At Tyr-134 the chain carries Nitrated tyrosine.

It belongs to the plant globin family. Monomer. In terms of processing, nitrated mainly at Tyr-31 and, to a lower extent, at Tyr-26 and Tyr-134, in effective nodules and particularly in hypoxic conditions; this mechanism may play a protective role in the symbiosis by buffering toxic peroxynitrite NO(2)(-). Nitration level decrease during nodule senescence. Phosphorylation at Ser-46 disrupts the molecular environment of its porphyrin ring oxygen binding pocket, thus leading to a reduced oxygen consumption and to the delivery of oxygen O(2) to symbiosomes. Root nodules.

It is found in the cytoplasm. The protein localises to the cytosol. It localises to the nucleus. Leghemoglobin that reversibly binds oxygen O(2) through a pentacoordinated heme iron. In root nodules, facilitates the diffusion of oxygen to the bacteroids while preventing the bacterial nitrogenase from being inactivated by buffering dioxygen, nitric oxide and carbon monoxide, and promoting the formation of reactive oxygen species (ROS, e.g. H(2)O(2)). This role is essential for symbiotic nitrogen fixation (SNF). This chain is Leghemoglobin, found in Phaseolus vulgaris (Kidney bean).